The chain runs to 518 residues: uncharacterized protein (518 aa).

Its subcellular location is the virion. This is an uncharacterized protein from Acanthamoeba polyphaga (Amoeba).